Reading from the N-terminus, the 472-residue chain is uncharacterized protein (472 aa).

The next 6 membrane-spanning stretches (helical) occupy residues 4-24 (IIILLALGLLMFTAYRGFSVI), 27-47 (APICALFAVLLTDPSHVLPFF), 56-76 (AGFIKLYFPVFLLGAIFGKVV), 99-119 (ILAIVLMGAVLTYSGVSLFVV), 140-160 (LIPGTIALGAFTFTMDALPGT), and 176-196 (IYAAPWLGLMGAVIVLAAGML). The tract at residues 209–229 (GEGYGGFDSQNAPAPESIESA) is disordered. A compositionally biased stretch (low complexity) spans 220–229 (APAPESIESA). 5 helical membrane passes run 240 to 260 (ALAFVPLILVGAVNKYFTIYL), 286 to 306 (AAAIWSVEIALVIGIITTILF), 323 to 343 (IGGALLASMNTGAEYGFGGII), 372 to 392 (TALAGITGSASGGMGIALSAM), and 448 to 468 (IFAITLIKTAAVFAVIAIYSL).

This sequence belongs to the CitM (TC 2.A.11) transporter family.

Its subcellular location is the cell membrane. This is an uncharacterized protein from Bacillus subtilis (strain 168).